The sequence spans 185 residues: Large ribosomal subunit protein uL5 (185 aa).

The protein belongs to the universal ribosomal protein uL5 family. Part of the 50S ribosomal subunit; part of the 5S rRNA/L5/L18/L25 subcomplex. Contacts the 5S rRNA and the P site tRNA. Forms a bridge to the 30S subunit in the 70S ribosome.

This is one of the proteins that bind and probably mediate the attachment of the 5S RNA into the large ribosomal subunit, where it forms part of the central protuberance. In the 70S ribosome it contacts protein S13 of the 30S subunit (bridge B1b), connecting the 2 subunits; this bridge is implicated in subunit movement. Contacts the P site tRNA; the 5S rRNA and some of its associated proteins might help stabilize positioning of ribosome-bound tRNAs. In Brucella abortus (strain S19), this protein is Large ribosomal subunit protein uL5.